The following is a 235-amino-acid chain: Small ribosomal subunit protein uS2c (235 aa).

Belongs to the universal ribosomal protein uS2 family.

It localises to the plastid. It is found in the chloroplast. The chain is Small ribosomal subunit protein uS2c (rps2) from Marchantia polymorpha (Common liverwort).